Reading from the N-terminus, the 459-residue chain is Sperm microtubule associated protein 2-like (459 aa).

The disordered stretch occupies residues 1–138 (MEEGDFSGSS…QEDGKDDLFP (138 aa)). The span at 21-30 (TTTTTETRTT) shows a compositional bias: low complexity. Positions 47 to 63 (NGDEAEAVGEEGQEEDY) are enriched in acidic residues. Positions 64 to 73 (EGSKTHKSHE) are enriched in basic and acidic residues. Positions 77–87 (SFRSHNSSDPP) are enriched in polar residues. Basic and acidic residues-rich tracts occupy residues 91–112 (KASDSLRSRKGIEPLEPRKTSD) and 127–136 (ERQEDGKDDL). THEG repeat units follow at residues 172-190 (KKCFYSRKRVQDLSKPKKQ), 212-231 (AALKAKLSKRIEDLAQPRLV), 258-277 (PALVTRPSKRIQKLAKPNKF), 291-310 (TTRYSDPSPRILRLSIAKGT), 327-346 (STLSAVATPRIVDLAHPRIK), 367-386 (AALLANPSKRTIFLAKSKRV), 403-422 (AATHSQVSERVQELANPHTR), and 440-459 (SALKAHCSDRVKELAEPIVR).

In Mus musculus (Mouse), this protein is Sperm microtubule associated protein 2-like.